The sequence spans 484 residues: Sorting assembly machinery 50 kDa subunit (484 aa).

This sequence belongs to the SAM50/omp85 family. As to quaternary structure, component of the mitochondrial outer membrane sorting assembly machinery (SAM or TOB) complex, which at least consists of SAM35, SAM37 and SAM50. Associates with the mitochondrial contact site and cristae organizing system (MICOS) complex (also known as MINOS or MitOS complex).

It localises to the mitochondrion outer membrane. Component of the mitochondrial outer membrane sorting assembly machinery (SAM or TOB) complex, which is required for the sorting of proteins with complicated topology, such as beta-barrel proteins, to the mitochondrial outer membrane after import by the TOM complex. The polypeptide is Sorting assembly machinery 50 kDa subunit (SAM50) (Saccharomyces cerevisiae (strain ATCC 204508 / S288c) (Baker's yeast)).